Reading from the N-terminus, the 184-residue chain is Probable RNA 2'-phosphotransferase (184 aa).

The protein belongs to the KptA/TPT1 family.

Functionally, removes the 2'-phosphate from RNA via an intermediate in which the phosphate is ADP-ribosylated by NAD followed by a presumed transesterification to release the RNA and generate ADP-ribose 1''-2''-cyclic phosphate (APPR&gt;P). May function as an ADP-ribosylase. In Burkholderia pseudomallei (strain K96243), this protein is Probable RNA 2'-phosphotransferase.